Here is a 263-residue protein sequence, read N- to C-terminus: Phosphatidylglycerol--prolipoprotein diacylglyceryl transferase (263 aa).

The next 4 membrane-spanning stretches (helical) occupy residues 6-26 (VIFS…VLGI), 50-70 (LLTA…VLIY), 85-105 (TWEG…AVII), and 112-132 (IPIF…LLLG). R133 is a binding site for a 1,2-diacyl-sn-glycero-3-phospho-(1'-sn-glycerol). Helical transmembrane passes span 169–189 (LYEA…LFYL), 197–217 (GATT…VEFF), and 233–253 (MGQL…LGAL).

Belongs to the Lgt family.

The protein localises to the cell membrane. It catalyses the reaction L-cysteinyl-[prolipoprotein] + a 1,2-diacyl-sn-glycero-3-phospho-(1'-sn-glycerol) = an S-1,2-diacyl-sn-glyceryl-L-cysteinyl-[prolipoprotein] + sn-glycerol 1-phosphate + H(+). It functions in the pathway protein modification; lipoprotein biosynthesis (diacylglyceryl transfer). Its function is as follows. Catalyzes the transfer of the diacylglyceryl group from phosphatidylglycerol to the sulfhydryl group of the N-terminal cysteine of a prolipoprotein, the first step in the formation of mature lipoproteins. The sequence is that of Phosphatidylglycerol--prolipoprotein diacylglyceryl transferase from Wolbachia pipientis subsp. Culex pipiens (strain wPip).